The primary structure comprises 199 residues: UPF0637 protein LVIS_1261 (199 aa).

The protein belongs to the UPF0637 family.

This is UPF0637 protein LVIS_1261 from Levilactobacillus brevis (strain ATCC 367 / BCRC 12310 / CIP 105137 / JCM 1170 / LMG 11437 / NCIMB 947 / NCTC 947) (Lactobacillus brevis).